A 309-amino-acid chain; its full sequence is DDRGK domain-containing protein 1 (309 aa).

At 1–2 (MD) the chain is on the lumenal side. Residues 3-23 (LIILVGIAVALLVVIVTLYLL) traverse the membrane as a helical segment. Over 24 to 309 (QKKNAAPETK…ISAGGGEASS (286 aa)) the chain is Cytoplasmic. Disordered stretches follow at residues 32-53 (TKVA…VPRR) and 79-175 (ALPA…KEER). Residues 87–96 (DHEDEGQVDG) show a composition bias toward acidic residues. Positions 107–175 (LDEKMGAKKR…DAERLAKEER (69 aa)) are enriched in basic and acidic residues. Positions 120–177 (EAKEQKRLQREQELHDREQRKVKEAKEEAERKQQEDLEAEAERKRVDAERLAKEERER) form a coiled coil.

Belongs to the DDRGK1 family. In terms of assembly, interacts with Atg9; the interaction is transient.

The protein localises to the endoplasmic reticulum membrane. Substrate adapter for ufmylation, the covalent attachment of the ubiquitin-like modifier UFM1 to substrate proteins. Required for ufmylation of Atg9; protects the nervous system during aging, possibly by stabilizing Atg9 and supporting its function. This Drosophila melanogaster (Fruit fly) protein is DDRGK domain-containing protein 1.